Reading from the N-terminus, the 294-residue chain is uncharacterized protein (294 aa).

It is found in the mitochondrion. This is an uncharacterized protein from Zea mays (Maize).